A 468-amino-acid polypeptide reads, in one-letter code: uncharacterized protein (468 aa).

The segment at 447–468 (AVHVSNGDKPKVALPDTQLGSH) is disordered.

This sequence belongs to the mycobacterial PPE family.

This is an uncharacterized protein from Mycobacterium tuberculosis (strain CDC 1551 / Oshkosh).